The following is a 189-amino-acid chain: Small ribosomal subunit protein uS5 (189 aa).

The region spanning 20–83 (FMDRLVHINR…ESAKRSLIRV (64 aa)) is the S5 DRBM domain.

Belongs to the universal ribosomal protein uS5 family. In terms of assembly, part of the 30S ribosomal subunit. Contacts proteins S4 and S8.

Functionally, with S4 and S12 plays an important role in translational accuracy. In terms of biological role, located at the back of the 30S subunit body where it stabilizes the conformation of the head with respect to the body. The protein is Small ribosomal subunit protein uS5 of Methylocella silvestris (strain DSM 15510 / CIP 108128 / LMG 27833 / NCIMB 13906 / BL2).